Consider the following 212-residue polypeptide: Nitrogen regulatory protein P-II homolog (212 aa).

Low complexity-rich tracts occupy residues 1–12 (MSSPATAAAAAA), 32–46 (TTTT…SRSR), and 63–74 (PPTAARAQSAAA). The transit peptide at 1–68 (MSSPATAAAA…PRRLPPTAAR (68 aa)) directs the protein to the chloroplast. Residues 1–74 (MSSPATAAAA…TAARAQSAAA (74 aa)) form a disordered region. Residues 117–121 (GFGAQ) and 170–173 (GDGK) each bind ATP. Gly-119 provides a ligand contact to Mg(2+).

Belongs to the P(II) protein family. In terms of assembly, homodimer.

Its subcellular location is the plastid. It localises to the chloroplast. Its function is as follows. Participates in sensing carbon and organic nitrogen status and regulates some steps of primary carbon and nitrogen metabolism. The polypeptide is Nitrogen regulatory protein P-II homolog (GLB) (Oryza sativa subsp. japonica (Rice)).